We begin with the raw amino-acid sequence, 246 residues long: Carboxy-S-adenosyl-L-methionine synthase (246 aa).

S-adenosyl-L-methionine is bound by residues Tyr43, 68–70 (GCS), 93–94 (DN), 121–122 (DI), Asn136, and Arg203.

This sequence belongs to the class I-like SAM-binding methyltransferase superfamily. Cx-SAM synthase family. In terms of assembly, homodimer.

It catalyses the reaction prephenate + S-adenosyl-L-methionine = carboxy-S-adenosyl-L-methionine + 3-phenylpyruvate + H2O. Functionally, catalyzes the conversion of S-adenosyl-L-methionine (SAM) to carboxy-S-adenosyl-L-methionine (Cx-SAM). The chain is Carboxy-S-adenosyl-L-methionine synthase from Vibrio cholerae serotype O1 (strain ATCC 39541 / Classical Ogawa 395 / O395).